The sequence spans 777 residues: Semaphorin-3D (777 aa).

Positions methionine 1–threonine 37 are cleaved as a signal peptide. Positions arginine 44–leucine 531 constitute a Sema domain. A disulfide bond links cysteine 117 and cysteine 128. The N-linked (GlcNAc...) asparagine glycan is linked to asparagine 139. Disulfide bonds link cysteine 146–cysteine 155, cysteine 286–cysteine 398, cysteine 310–cysteine 358, and cysteine 534–cysteine 552. The 53-residue stretch at arginine 533–tryptophan 585 folds into the PSI domain. An Ig-like C2-type domain is found at serine 592–threonine 680. 2 N-linked (GlcNAc...) asparagine glycosylation sites follow: asparagine 607 and asparagine 724. Residues cysteine 665 and cysteine 731 are joined by a disulfide bond. The segment covering arginine 740–histidine 765 has biased composition (basic residues). A disordered region spans residues arginine 740–threonine 777. The span at arginine 766–threonine 777 shows a compositional bias: basic and acidic residues.

This sequence belongs to the semaphorin family.

It is found in the secreted. Induces the collapse and paralysis of neuronal growth cones. Could potentially act as repulsive cues toward specific neuronal populations. Binds to neuropilin. This chain is Semaphorin-3D (Sema3d), found in Mus musculus (Mouse).